The primary structure comprises 100 residues: Signal recognition particle 19 kDa protein (100 aa).

Belongs to the SRP19 family. As to quaternary structure, part of the signal recognition particle protein translocation system, which is composed of SRP and FtsY. Archaeal SRP consists of a 7S RNA molecule of 300 nucleotides and two protein subunits: SRP54 and SRP19.

It is found in the cytoplasm. Its function is as follows. Involved in targeting and insertion of nascent membrane proteins into the cytoplasmic membrane. Binds directly to 7S RNA and mediates binding of the 54 kDa subunit of the SRP. The chain is Signal recognition particle 19 kDa protein from Pyrococcus furiosus (strain ATCC 43587 / DSM 3638 / JCM 8422 / Vc1).